Here is a 345-residue protein sequence, read N- to C-terminus: NADH-quinone oxidoreductase subunit H (345 aa).

Helical transmembrane passes span 15–35, 82–102, 115–135, 161–181, 190–210, 240–262, 278–298, and 309–329; these read MLLQ…FMVY, FVYF…FVVI, VGIL…IMGG, LGLI…TAIV, LLNW…VSAL, YLLF…SLLF, WWMV…KAIV, and IGWK…AILA.

Belongs to the complex I subunit 1 family. As to quaternary structure, NDH-1 is composed of at least 14 different subunits, Nqo1 to Nqo14. The complex has a L-shaped structure, with the hydrophobic arm (subunits Nqo7, Nqo8, Nqo10 to Nqo14) embedded in the inner membrane and the hydrophilic peripheral arm (subunits Nqo1 to Nqo6, Nqo9) protruding into the bacterial cytoplasm. The hydrophilic domain contains all the redox centers. NADH-quinone oxidoreductase forms a supercomplex with ubiquinol-cytochrome c reductase complex (complex III or cytochrome b-c1 complex) and cytochrome c oxidase (complex IV), which stabilizes the NADH-quinone oxidoreductase complex.

The protein localises to the cell inner membrane. The enzyme catalyses a quinone + NADH + 5 H(+)(in) = a quinol + NAD(+) + 4 H(+)(out). NDH-1 shuttles electrons from NADH, via FMN and iron-sulfur (Fe-S) centers, to quinones in the respiratory chain. The immediate electron acceptor for the enzyme in this species is believed to be ubiquinone. Couples the redox reaction to proton translocation (for every two electrons transferred, four hydrogen ions are translocated across the cytoplasmic membrane), and thus conserves the redox energy in a proton gradient. This subunit may bind ubiquinone. The chain is NADH-quinone oxidoreductase subunit H from Paracoccus denitrificans (strain Pd 1222).